We begin with the raw amino-acid sequence, 345 residues long: Probable G-protein coupled receptor 139 (345 aa).

At 1-21 (MEHTHAHLAANSSACGLGFVP) the chain is on the extracellular side. A glycan (N-linked (GlcNAc...) asparagine) is linked at N11. A helical membrane pass occupies residues 22–42 (VVYYSFLLCLGLPANILTVII). At 43–57 (LSQLVARRQKSSYNY) the chain is on the cytoplasmic side. Residues 58–78 (LLALAAADILVLFFIVFVDFL) traverse the membrane as a helical segment. Topologically, residues 79–94 (LEDFILTMQMPLIPDK) are extracellular. The helical transmembrane segment at 95-115 (IIEVLEFSSIHTSIWITVPLT) threads the bilayer. Residues 116-140 (VDRYIAVCHPLKYHTVSYPARTRKV) lie on the Cytoplasmic side of the membrane. Residues 141–161 (ILSVYITCFLTSIPYYWWPNI) form a helical membrane-spanning segment. The Extracellular portion of the chain corresponds to 162-173 (WTEDYISTSMHH). The chain crosses the membrane as a helical span at residues 174–194 (VLVWIHCFTVYLVPCSIFFIL). Residues 195–220 (NSIIVYKLRRKSNFRLRGYSTGKTTA) are Cytoplasmic-facing. A helical transmembrane segment spans residues 221-241 (ILFTITSIFATLWAPRIIMIL). Residues 242-260 (YHLYGAPIQNPWLVHIMLD) are Extracellular-facing. The helical transmembrane segment at 261–281 (VANMLALLNTAINFFLYCFIS) threads the bilayer. Over 282-345 (KRFRTMAAAT…KHGKPIKVSP (64 aa)) the chain is Cytoplasmic.

Belongs to the G-protein coupled receptor 1 family. In terms of tissue distribution, expressed almost exclusively in the brain. Abundantly expressed in the ventrolateral region of caudate putamen, the habenular nucleus, the zona incerta, and the medial mammillary nucleus.

It is found in the cell membrane. Its function is as follows. Orphan receptor. Seems to act through a G(q/11)-mediated pathway. This Mus musculus (Mouse) protein is Probable G-protein coupled receptor 139 (Gpr139).